A 261-amino-acid chain; its full sequence is [LysW]-aminoadipate/[LysW]-glutamate kinase (261 aa).

Residues glycine 35 to glycine 36, arginine 62, and asparagine 166 each bind substrate.

This sequence belongs to the acetylglutamate kinase family. LysZ subfamily.

It is found in the cytoplasm. The catalysed reaction is [amino-group carrier protein]-C-terminal-N-(1,4-dicarboxybutan-1-yl)-L-glutamine + ATP = [amino-group carrier protein]-C-terminal-N-(1-carboxy-5-phosphooxy-5-oxopentan-1-yl)-L-glutamine + ADP. The enzyme catalyses [amino-group carrier protein]-C-terminal-gamma-(L-glutamyl)-L-glutamate + ATP = [amino-group carrier protein]-C-terminal-gamma-(5-phospho-L-glutamyl)-L-glutamate + ADP. It participates in amino-acid biosynthesis; L-lysine biosynthesis via AAA pathway; L-lysine from L-alpha-aminoadipate (Thermus route): step 2/5. The protein operates within amino-acid biosynthesis; L-arginine biosynthesis. In terms of biological role, involved in both the arginine and lysine biosynthetic pathways. Phosphorylates the LysW-bound precursors glutamate (for arginine biosynthesis), respectively alpha-aminoadipate (for lysine biosynthesis). In Sulfolobus acidocaldarius (strain ATCC 33909 / DSM 639 / JCM 8929 / NBRC 15157 / NCIMB 11770), this protein is [LysW]-aminoadipate/[LysW]-glutamate kinase.